The sequence spans 466 residues: Dynein axonemal assembly factor 11 (466 aa).

LRR repeat units follow at residues 22-43, 45-66, 67-88, and 89-110; these read SLEE…DKWC, DLKI…SKLK, KLEY…EGCE, and ELAK…KNLQ. The LRRCT domain occupies 123 to 161; that stretch reads NPCASFDHYREFVVATLPQLKWLDGKEIEPSERIKALQD. The stretch at 178–204 forms a coiled coil; that stretch reads LKRAKLKEEAQRKHQEEDKNEDKRSNA. The span at 185 to 202 shows a compositional bias: basic and acidic residues; the sequence is EEAQRKHQEEDKNEDKRS. 3 disordered regions span residues 185 to 206, 268 to 288, and 391 to 466; these read EEAQ…NAGF, MEKQ…VKPP, and AFKS…PPLI. Residues 269–287 are compositionally biased toward basic residues; sequence EKQRKKQEKLSEKKKKVKP. A CS domain is found at 301–396; that stretch reads VNEPKIDFSL…GGQRAFKSMK (96 aa). 2 stretches are compositionally biased toward basic and acidic residues: residues 398-425 and 433-445; these read TSDR…KHSF and QEKK…RPEP. Over residues 450-460 the composition is skewed to acidic residues; sequence SEEDPTFEDNP.

Belongs to the tilB family. As to quaternary structure, interacts (via CS domain) with ZMYND10 (via C-terminus). Expressed predominantly in testis and in nasal epithelial cells.

It is found in the cytoplasm. Its subcellular location is the cell projection. It localises to the cilium. The protein localises to the dynein axonemal particle. The protein resides in the flagellum. Its function is as follows. Involved in dynein arm assembly, is important for expression and transporting outer dynein arm (ODA) proteins from the cytoplasm to the cilia. Acts as a crucial component in the formation and motility of spermatozoal flagella. This is Dynein axonemal assembly factor 11 from Homo sapiens (Human).